We begin with the raw amino-acid sequence, 412 residues long: Isocitrate dehydrogenase [NADP] (412 aa).

Threonine 100 contacts NADP(+). Serine 109, asparagine 111, arginine 115, arginine 125, and arginine 149 together coordinate D-threo-isocitrate. Aspartate 301 contributes to the Mg(2+) binding site. NADP(+) contacts are provided by residues 333-339 (HGSAPKY), asparagine 346, tyrosine 385, and arginine 389.

Belongs to the isocitrate and isopropylmalate dehydrogenases family. Homodimer. Requires Mg(2+) as cofactor. Mn(2+) serves as cofactor.

It catalyses the reaction D-threo-isocitrate + NADP(+) = 2-oxoglutarate + CO2 + NADPH. In terms of biological role, catalyzes the oxidative decarboxylation of isocitrate to 2-oxoglutarate and carbon dioxide with the concomitant reduction of NADP(+). NAD(+) can replace NADP(+) with low efficiency. This Archaeoglobus fulgidus (strain ATCC 49558 / DSM 4304 / JCM 9628 / NBRC 100126 / VC-16) protein is Isocitrate dehydrogenase [NADP].